A 574-amino-acid polypeptide reads, in one-letter code: Putative thiamine pyrophosphate-containing protein YdaP (574 aa).

A coiled-coil region spans residues 28-55; sequence DSINEFIEELRHERNQLKFIQTRHEEVA. Position 52 (E52) interacts with thiamine diphosphate. Residues 256–277 and 294–313 contribute to the FAD site; these read IGTK…LGTS and DSDP…LVCD. Residues 384-464 form a thiamine pyrophosphate binding region; it reads TVTVWMARHF…ITVVILNNEN (81 aa). Residues D435 and N462 each contribute to the Mg(2+) site.

It belongs to the TPP enzyme family. Mg(2+) is required as a cofactor. Requires thiamine diphosphate as cofactor.

The sequence is that of Putative thiamine pyrophosphate-containing protein YdaP (ydaP) from Bacillus subtilis (strain 168).